The following is a 393-amino-acid chain: 4-hydroxyphenylpyruvate dioxygenase (393 aa).

Thr-2 carries the post-translational modification N-acetylthreonine. 2 consecutive VOC domains span residues 18–149 (HFHS…LVEK) and 180–338 (IIDH…IFTK). At Lys-132 the chain carries N6-succinyllysine. His-183 contacts Fe cation. A phosphoserine mark is found at Ser-211, Ser-226, and Ser-250. His-266 and Glu-349 together coordinate Fe cation.

The protein belongs to the 4HPPD family. In terms of assembly, homodimer. The cofactor is Fe cation.

Its subcellular location is the cytoplasm. The protein resides in the endoplasmic reticulum membrane. It localises to the golgi apparatus membrane. The catalysed reaction is 3-(4-hydroxyphenyl)pyruvate + O2 = homogentisate + CO2. Its pathway is amino-acid degradation; L-phenylalanine degradation; acetoacetate and fumarate from L-phenylalanine: step 3/6. Its function is as follows. Catalyzes the conversion of 4-hydroxyphenylpyruvic acid to homogentisic acid, one of the steps in tyrosine catabolism. The polypeptide is 4-hydroxyphenylpyruvate dioxygenase (Hpd) (Mus musculus (Mouse)).